A 209-amino-acid polypeptide reads, in one-letter code: Interleukin-6 (209 aa).

The N-terminal stretch at 1 to 26 (RFTSAFSPVAFSLGLLLVMATAFPTP) is a signal peptide. The disordered stretch occupies residues 28 to 47 (PVGGESQADATSNRPPLTSP). Cysteines 69 and 75 form a disulfide. The residue at position 78 (serine 78) is a Phosphoserine. The cysteines at positions 98 and 108 are disulfide-linked.

It belongs to the IL-6 superfamily. As to quaternary structure, component of a hexamer of two molecules each of IL6, IL6R and IL6ST; first binds to IL6R to associate with the signaling subunit IL6ST. Interacts with IL6R (via the N-terminal ectodomain); this interaction may be affected by IL6R-binding with SORL1, hence decreasing IL6 cis signaling. Interacts with SORL1 (via the N-terminal ectodomain); this interaction leads to IL6 internalization and lysosomal degradation. May form a trimeric complex with the soluble SORL1 ectodomain and soluble IL6R receptor; this interaction might stabilize circulating IL6, hence promoting IL6 trans signaling.

It localises to the secreted. Functionally, cytokine with a wide variety of biological functions in immunity, tissue regeneration, and metabolism. Binds to IL6R, then the complex associates to the signaling subunit IL6ST/gp130 to trigger the intracellular IL6-signaling pathway. The interaction with the membrane-bound IL6R and IL6ST stimulates 'classic signaling', whereas the binding of IL6 and soluble IL6R to IL6ST stimulates 'trans-signaling'. Alternatively, 'cluster signaling' occurs when membrane-bound IL6:IL6R complexes on transmitter cells activate IL6ST receptors on neighboring receiver cells. IL6 is a potent inducer of the acute phase response. Rapid production of IL6 contributes to host defense during infection and tissue injury, but excessive IL6 synthesis is involved in disease pathology. In the innate immune response, is synthesized by myeloid cells, such as macrophages and dendritic cells, upon recognition of pathogens through toll-like receptors (TLRs) at the site of infection or tissue injury. In the adaptive immune response, is required for the differentiation of B cells into immunoglobulin-secreting cells. Plays a major role in the differentiation of CD4(+) T cell subsets. Essential factor for the development of T follicular helper (Tfh) cells that are required for the induction of germinal-center formation. Required to drive naive CD4(+) T cells to the Th17 lineage. Also required for proliferation of myeloma cells and the survival of plasmablast cells. In terms of biological role, acts as an essential factor in bone homeostasis and on vessels directly or indirectly by induction of VEGF, resulting in increased angiogenesis activity and vascular permeability. Induces, through 'trans-signaling' and synergistically with IL1B and TNF, the production of VEGF. Involved in metabolic controls, is discharged into the bloodstream after muscle contraction increasing lipolysis and improving insulin resistance. 'Trans-signaling' in central nervous system also regulates energy and glucose homeostasis. Mediates, through GLP-1, crosstalk between insulin-sensitive tissues, intestinal L cells and pancreatic islets to adapt to changes in insulin demand. Also acts as a myokine. Plays a protective role during liver injury, being required for maintenance of tissue regeneration. Also has a pivotal role in iron metabolism by regulating HAMP/hepcidin expression upon inflammation or bacterial infection. Through activation of IL6ST-YAP-NOTCH pathway, induces inflammation-induced epithelial regeneration. This Phoca vitulina (Harbor seal) protein is Interleukin-6 (IL6).